Here is a 66-residue protein sequence, read N- to C-terminus: Large ribosomal subunit protein bL35 (66 aa).

The span at 1–16 shows a compositional bias: basic residues; sequence MPKQKTHRASAKRFKR. Positions 1 to 21 are disordered; the sequence is MPKQKTHRASAKRFKRTGSGG.

Belongs to the bacterial ribosomal protein bL35 family.

The polypeptide is Large ribosomal subunit protein bL35 (Streptococcus sanguinis (strain SK36)).